The sequence spans 205 residues: Urease accessory protein UreG (205 aa).

10–17 (GPVGSGKT) lines the GTP pocket.

It belongs to the SIMIBI class G3E GTPase family. UreG subfamily. As to quaternary structure, homodimer. UreD, UreF and UreG form a complex that acts as a GTP-hydrolysis-dependent molecular chaperone, activating the urease apoprotein by helping to assemble the nickel containing metallocenter of UreC. The UreE protein probably delivers the nickel.

It localises to the cytoplasm. Facilitates the functional incorporation of the urease nickel metallocenter. This process requires GTP hydrolysis, probably effectuated by UreG. The sequence is that of Urease accessory protein UreG from Corynebacterium urealyticum (strain ATCC 43042 / DSM 7109).